Reading from the N-terminus, the 325-residue chain is MQGVRITILWCIVLATIYAEEGPSTPRDDDPVIQKVRGLRNAGMKANDERMFKDAIEKLRHAISLLHNRVFGEERAAIKDPTVISQDAALYAQILNDYGSVLIRTKQYDEAIEVLEDSVAMIEKIYGDSHPSLGLSLRSLADAYMEKKAFKSAIKRYKTLRKHVKKGLGMTHEAYIEASLKIAEGYKKLNKKDTSRKVLKDTLKAQGGEINGLTIGIAELYMELSSAHVEVGEIDDALRAAETASAIFLQREGKDTMAYAFSLNALAGVKMQQKKVDEAIDLLDRAHNIAVSIYGENDRITLASAKTLQDVKDHKMNLLAAKDEL.

The N-terminal stretch at 1-19 is a signal peptide; the sequence is MQGVRITILWCIVLATIYA. TPR repeat units lie at residues 37–75, 92–125, 134–167, 218–251, and 260–293; these read RGLRNAGMKANDERMFKDAIEKLRHAISLLHNRVFGEER, AQILNDYGSVLIRTKQYDEAIEVLEDSVAMIEKI, GLSLRSLADAYMEKKAFKSAIKRYKTLRKHVKKG, AELYMELSSAHVEVGEIDDALRAAETASAIFLQR, and AFSLNALAGVKMQQKKVDEAIDLLDRAHNIAVSI. The short motif at 37-75 is the RxLR-dEER element; that stretch reads RGLRNAGMKANDERMFKDAIEKLRHAISLLHNRVFGEER.

Belongs to the RxLR effector family.

The protein resides in the secreted. Its subcellular location is the host cytoplasm. The protein localises to the host nucleus. It is found in the host nucleolus. Secreted effector that suppresses pattern-triggered immunity (PTI) in plant host. The chain is Secreted RxLR effector protein RXLR-C07 from Plasmopara halstedii (Downy mildew of sunflower).